Here is a 472-residue protein sequence, read N- to C-terminus: Phosphoenolpyruvate carboxylase (472 aa).

Belongs to the PEPCase type 2 family. Homotetramer. Mg(2+) is required as a cofactor.

The enzyme catalyses oxaloacetate + phosphate = phosphoenolpyruvate + hydrogencarbonate. Catalyzes the irreversible beta-carboxylation of phosphoenolpyruvate (PEP) to form oxaloacetate (OAA), a four-carbon dicarboxylic acid source for the tricarboxylic acid cycle. In Pyrococcus furiosus (strain ATCC 43587 / DSM 3638 / JCM 8422 / Vc1), this protein is Phosphoenolpyruvate carboxylase.